Consider the following 1065-residue polypeptide: Tubulin glycylase 3C (1065 aa).

Disordered stretches follow at residues 1 to 146 (MSSL…REDK), 158 to 182 (IREQKEVNLESQTEQSDHSNVTKSK), 301 to 326 (STQKQLVRASSAEGDKEKDDKKDIAK), 341 to 360 (EKKRQEIAKEEEEKKKKEQL), 381 to 482 (FFVD…GNGS), and 708 to 755 (NKQK…EKQM). Low complexity predominate over residues 23-53 (QEGNQEDLNNQNDHNLNNNELDSLSSPPSDN). The span at 54 to 63 (YNEEEFEQED) shows a compositional bias: acidic residues. Over residues 73 to 92 (QNASQNNISQTQRISQTQLP) the composition is skewed to polar residues. Residues 122-146 (LMEKKKKEQEEKEKKELKLKKREDK) show a composition bias toward basic and acidic residues. Over residues 166–179 (LESQTEQSDHSNVT) the composition is skewed to polar residues. Residues 313–326 (EGDKEKDDKKDIAK) are compositionally biased toward basic and acidic residues. A compositionally biased stretch (basic and acidic residues) spans 385-403 (VPEKKPKKEKKKNESKEDN). The segment covering 404-423 (IQITSPKLNSTKSLSSQITR) has biased composition (polar residues). The segment covering 424-450 (KTNDAKKVEKLPKIKDSNKENHSKERN) has biased composition (basic and acidic residues). Residues 451-479 (EDNEEGDDGEYECDEGDEGASDGEDEDDG) show a composition bias toward acidic residues. A TTL domain is found at 633 to 1009 (YFEKDPDIEK…DYGMEKSKKA (377 aa)). Residues 709-721 (KQKPKKKKKKSKK) show a composition bias toward basic residues. Residues 722–733 (DKQQGDTEKKEE) show a composition bias toward basic and acidic residues. Positions 734–754 (EEGEAEDEEEDEEDEEEEEKQ) are enriched in acidic residues. Residues 821–824 (QKYI), lysine 834, and aspartate 836 each bind ATP.

The protein resides in the cell projection. It is found in the cilium. It localises to the cytoplasm. The protein localises to the cytoskeleton. Its subcellular location is the cilium axoneme. Probable glycylase which modifies tubulin, generating side chains of glycine on the gamma-carboxyl groups of specific glutamate residues within the C-terminal tail of tubulin. This chain is Tubulin glycylase 3C (TTLL3C), found in Tetrahymena thermophila (strain SB210).